Reading from the N-terminus, the 258-residue chain is Trans-aconitate 2-methyltransferase (258 aa).

It belongs to the methyltransferase superfamily. Tam family.

Its subcellular location is the cytoplasm. The catalysed reaction is trans-aconitate + S-adenosyl-L-methionine = (E)-3-(methoxycarbonyl)pent-2-enedioate + S-adenosyl-L-homocysteine. Its function is as follows. Catalyzes the S-adenosylmethionine monomethyl esterification of trans-aconitate. In Acidovorax sp. (strain JS42), this protein is Trans-aconitate 2-methyltransferase.